The following is a 285-amino-acid chain: Bark agglutinin I polypeptide A (285 aa).

The N-terminal stretch at 1 to 31 (MTSYNFKTQTSFPLLLSISFFFLLLLNKVNS) is a signal peptide. N-linked (GlcNAc...) asparagine glycosylation is present at Asn-147. Mn(2+) contacts are provided by Glu-156 and Asp-158. Ca(2+) is bound by residues Asp-158, Phe-160, Asn-162, and Asp-166. Mn(2+) is bound by residues Asp-166 and His-171. Asn-188 is a glycosylation site (N-linked (GlcNAc...) asparagine).

The protein belongs to the leguminous lectin family. As to quaternary structure, RPbAI is composed of two polypeptides, A and B, that associate into five different tetrameric isolectins. The A4 combination is the only one devoid of agglutination activity. Isoform B4 displays maximal agglutination activity. Strong expression in seed. Lower levels in the flower, and the bark of the roots. No expression in leaf. The lectin accumulates in the inner bark in autumn.

N-acetyl-D-galactosamine specific lectin. Bark lectins are storage protein that probably maintains stocks of nitrogen during dormant period. Self-aggregatable molecules that can bind their own carbohydrate side chains. They could also play a role in the plant's defense against phytophagous invertebrates or herbivorous higher animals. This is Bark agglutinin I polypeptide A from Robinia pseudoacacia (Black locust).